The sequence spans 126 residues: 13 kDa ribonucleoprotein-associated protein (126 aa).

The protein belongs to the eukaryotic ribosomal protein eL8 family. Component of the U3 snoRNP particle. Binds to the C'/D and B/C motifs in U3 snoRNA. Component of the 25S U4/U6.U5 tri-snRNP particle, a subcomplex of the spliceosome. Binds to the 5' stem-loop of U4 snRNA.

It localises to the nucleus. Its subcellular location is the nucleolus. Functionally, common component of the spliceosome and rRNA processing machinery. In association with the spliceosomal U4/U6.U5 tri-snRNP particle, required for splicing of pre-mRNA. In association with box C/D snoRNPs, required for processing of pre-ribosomal RNA (rRNA) and site-specific 2'-O-methylation of substrate RNAs. Essential for the accumulation and stability of U4 snRNA, U6 snRNA, and box C/D snoRNAs. The chain is 13 kDa ribonucleoprotein-associated protein (SNU13) from Debaryomyces hansenii (strain ATCC 36239 / CBS 767 / BCRC 21394 / JCM 1990 / NBRC 0083 / IGC 2968) (Yeast).